The following is a 287-amino-acid chain: Homoserine kinase (287 aa).

Residue 78–88 participates in ATP binding; that stretch reads PLSRGLGSSST.

It belongs to the GHMP kinase family. Homoserine kinase subfamily.

It is found in the cytoplasm. The enzyme catalyses L-homoserine + ATP = O-phospho-L-homoserine + ADP + H(+). Its pathway is amino-acid biosynthesis; L-threonine biosynthesis; L-threonine from L-aspartate: step 4/5. Catalyzes the ATP-dependent phosphorylation of L-homoserine to L-homoserine phosphate. This Lactobacillus gasseri (strain ATCC 33323 / DSM 20243 / BCRC 14619 / CIP 102991 / JCM 1131 / KCTC 3163 / NCIMB 11718 / NCTC 13722 / AM63) protein is Homoserine kinase.